A 590-amino-acid polypeptide reads, in one-letter code: Aspartate--tRNA ligase (590 aa).

E174 contacts L-aspartate. The tract at residues 198-201 is aspartate; it reads QLMK. An L-aspartate-binding site is contributed by R220. ATP is bound by residues 220-222 and Q229; that span reads RDE. Residue H443 coordinates L-aspartate. E484 contacts ATP. R491 is an L-aspartate binding site. Position 536-539 (536-539) interacts with ATP; sequence GLDR.

The protein belongs to the class-II aminoacyl-tRNA synthetase family. Type 1 subfamily. As to quaternary structure, homodimer.

The protein localises to the cytoplasm. The catalysed reaction is tRNA(Asp) + L-aspartate + ATP = L-aspartyl-tRNA(Asp) + AMP + diphosphate. Catalyzes the attachment of L-aspartate to tRNA(Asp) in a two-step reaction: L-aspartate is first activated by ATP to form Asp-AMP and then transferred to the acceptor end of tRNA(Asp). The sequence is that of Aspartate--tRNA ligase from Lactococcus lactis subsp. cremoris (strain MG1363).